The sequence spans 495 residues: Protein YhjJ (495 aa).

Residues 1-24 (MQGTKIRLLAGSLLMLASAGYVQA) form the signal peptide.

Belongs to the peptidase M16 family.

Its subcellular location is the periplasm. This chain is Protein YhjJ (yhjJ), found in Salmonella typhimurium (strain LT2 / SGSC1412 / ATCC 700720).